The sequence spans 185 residues: Thymidine kinase (185 aa).

ATP-binding positions include 10 to 17 (GPMYSGKT) and 83 to 86 (DEVQ). Glu84 (proton acceptor) is an active-site residue. Zn(2+) contacts are provided by Cys140, Cys143, Cys173, and Cys176.

It belongs to the thymidine kinase family. As to quaternary structure, homotetramer.

It is found in the cytoplasm. The catalysed reaction is thymidine + ATP = dTMP + ADP + H(+). This Pseudothermotoga lettingae (strain ATCC BAA-301 / DSM 14385 / NBRC 107922 / TMO) (Thermotoga lettingae) protein is Thymidine kinase.